The chain runs to 738 residues: Integrin beta-2-like protein (738 aa).

A signal peptide spans 1–22 (MLGQCTLLPVLAGLLSLESALS). Residues 23-671 (QLCTKDNVST…LVCAEISNTT (649 aa)) lie on the Extracellular side of the membrane. The region spanning 24 to 74 (LCTKDNVSTCQDCIRSGPSCAWCQKLNFTGRGEPDSVRCDTPEQLLLKGCT) is the PSI domain. Disulfide bonds link cysteine 25/cysteine 419, cysteine 33/cysteine 43, cysteine 36/cysteine 73, cysteine 46/cysteine 62, cysteine 218/cysteine 258, cysteine 358/cysteine 372, cysteine 421/cysteine 439, cysteine 431/cysteine 442, cysteine 444/cysteine 453, cysteine 455/cysteine 486, cysteine 469/cysteine 484, cysteine 478/cysteine 489, cysteine 491/cysteine 506, cysteine 508/cysteine 531, cysteine 513/cysteine 529, cysteine 521/cysteine 534, cysteine 536/cysteine 545, cysteine 547/cysteine 570, cysteine 554/cysteine 568, cysteine 562/cysteine 573, cysteine 575/cysteine 584, cysteine 594/cysteine 603, and cysteine 600/cysteine 664. Residue asparagine 29 is glycosylated (N-linked (GlcNAc...) asparagine). Asparagine 50, asparagine 102, asparagine 173, asparagine 226, asparagine 252, asparagine 342, asparagine 360, and asparagine 386 each carry an N-linked (GlcNAc...) asparagine glycan. Residues 126-329 (SVDLYFLMGL…DSSNVAQLIR (204 aa)) form the VWFA domain. I-EGF domains are found at residues 421–454 (CQEQ…KNCE), 455–507 (CQTQ…QYCE), 508–546 (CNNV…SACQ), and 547–585 (CRMS…PLCE). Asparagine 473 carries N-linked (GlcNAc...) asparagine glycosylation. Asparagine 627 and asparagine 669 each carry an N-linked (GlcNAc...) asparagine glycan. A helical transmembrane segment spans residues 672–692 (ILLGVIVGVLLAVIFLLVYCM). Topologically, residues 693–738 (VYLKGTQKAAKLPRKGGAQSTLAQQPHFQEPHHVEPVWNQERQGTQ) are cytoplasmic. The interval 709–738 (GAQSTLAQQPHFQEPHHVEPVWNQERQGTQ) is disordered. Polar residues predominate over residues 710–719 (AQSTLAQQPH).

This sequence belongs to the integrin beta chain family. In terms of assembly, monomer and homodimer. Unlike integrin beta chains, no alpha chain partner has yet been found. Post-translationally, N-glycosylated. Expressed predominantly in maturing and mature neutrophils.

Its subcellular location is the cell membrane. During inflammatory stimulation, plays a role in retaining Cxcl13-expressing cells at the site of the inflammatory response. The sequence is that of Integrin beta-2-like protein from Mus musculus (Mouse).